The chain runs to 338 residues: Solute carrier family 35 member G4 (338 aa).

Residues 1–29 (MAGSHPYFNLPDSTHPSPPSTPPSLHWHQ) form a disordered region. Transmembrane regions (helical) follow at residues 37-57 (TNGL…VGPL), 160-180 (CGLL…LWTL), 190-210 (GLGY…LLVY), 221-241 (TVAF…LFVL), 250-270 (LLSW…FTCV), 281-301 (LVCA…YFML), and 305-325 (VAPS…IITA). Residues 49-174 (LPAGFVGPLS…SILGLIIIVG (126 aa)) enclose the EamA 1 domain. The region spanning 272-325 (YAVTKAHPALVCAVLHSEVVMALILQYFMLHETVAPSDIMGAGVVLGSIAIITA) is the EamA 2 domain.

Belongs to the SLC35G solute transporter family.

It localises to the membrane. This chain is Solute carrier family 35 member G4 (SLC35G4), found in Homo sapiens (Human).